Consider the following 96-residue polypeptide: Integration host factor subunit beta (96 aa).

The protein belongs to the bacterial histone-like protein family. Heterodimer of an alpha and a beta chain.

In terms of biological role, this protein is one of the two subunits of integration host factor, a specific DNA-binding protein that functions in genetic recombination as well as in transcriptional and translational control. In Methylocella silvestris (strain DSM 15510 / CIP 108128 / LMG 27833 / NCIMB 13906 / BL2), this protein is Integration host factor subunit beta.